The primary structure comprises 110 residues: U1-lycotoxin-Ls1mm (110 aa).

The first 20 residues, Met1 to Ala20, serve as a signal peptide directing secretion. Residues Glu21–Arg44 constitute a propeptide that is removed on maturation. 4 cysteine pairs are disulfide-bonded: Cys47–Cys62, Cys54–Cys71, Cys61–Cys89, and Cys73–Cys87.

Belongs to the neurotoxin 19 (CSTX) family. 03 subfamily. As to expression, expressed by the venom gland.

Its subcellular location is the secreted. In Lycosa singoriensis (Wolf spider), this protein is U1-lycotoxin-Ls1mm.